A 152-amino-acid polypeptide reads, in one-letter code: Snaclec 5 (152 aa).

Positions 1-23 (MGRFIFLSSGLLVVFLSLSGTGA) are cleaved as a signal peptide. 3 disulfide bridges follow: Cys27/Cys38, Cys55/Cys148, and Cys123/Cys140. The region spanning 34–149 (YGQHCYRAFK…CASHNPFVCK (116 aa)) is the C-type lectin domain.

It belongs to the snaclec family. Heterodimer; disulfide-linked. Expressed by the venom gland.

It localises to the secreted. Functionally, interferes with one step of hemostasis (modulation of platelet aggregation, or coagulation cascade, for example). The protein is Snaclec 5 of Bitis arietans (African puff adder).